The primary structure comprises 875 residues: Ubiquitin-protein ligase E3A (875 aa).

Residues 44 to 83 form a C4-type; atypical zinc finger; that stretch reads CGNEACTNEFCASCPTFLRMDNNAAAIKALELYKINAKLC. Residues 175-186 show a composition bias toward basic and acidic residues; sequence KEELKSLQAKDE. Positions 175–226 are disordered; sequence KEELKSLQAKDEDKDEDEKEKAACSAAAMEEDSEASSSRIGDSSQGDNNLQK. Residues 213-225 show a composition bias toward polar residues; the sequence is RIGDSSQGDNNLQ. Serine 218 is modified (phosphoserine). Residues 401–418 form an E6-binding region; it reads IPESSELTLQELLGEERR. Residues 418 to 517 form an interaction with HCV core protein region; that stretch reads RNKKGPRVDP…TVLYSLVQGQ (100 aa). Tyrosine 659 is subject to Phosphotyrosine; by ABL1. In terms of domain architecture, HECT spans 776–875; sequence YDGGYTRDSV…ITYAKGFGML (100 aa). Cysteine 843 functions as the Glycyl thioester intermediate in the catalytic mechanism.

The active form is probably a homotrimer. Binds UBQLN1 and UBQLN2. Interacts with the 26S proteasome. Interacts with BPY2. Interacts with HIF1AN, MAPK6 and NEURL4; interaction with MAPK6 may be mediated by NEURL4. Interacts with the proteasomal subunit PSMD4. Interacts with ESR1 and WBP2. Interacts with BMAL1. Interacts with ARC. As to quaternary structure, (Microbial infection) Interacts with HCV core protein and targets it to degradation. In terms of assembly, (Microbial infection) Interacts with the E6 protein of the cancer-associated human papillomavirus types 16 and 18. The E6/E6-AP complex binds to and targets the p53/TP53 tumor-suppressor protein for ubiquitin-mediated proteolysis. In terms of processing, phosphorylation at Tyr-659 by ABL1 impairs E3 ligase activity and protects p53/TP53 from degradation in (HPV)-infected cells.

The protein localises to the cytoplasm. It is found in the nucleus. The enzyme catalyses S-ubiquitinyl-[E2 ubiquitin-conjugating enzyme]-L-cysteine + [acceptor protein]-L-lysine = [E2 ubiquitin-conjugating enzyme]-L-cysteine + N(6)-ubiquitinyl-[acceptor protein]-L-lysine.. It functions in the pathway protein modification; protein ubiquitination. Its function is as follows. E3 ubiquitin-protein ligase which accepts ubiquitin from an E2 ubiquitin-conjugating enzyme in the form of a thioester and transfers it to its substrates. Several substrates have been identified including the BMAL1, ARC, LAMTOR1, RAD23A and RAD23B, MCM7 (which is involved in DNA replication), annexin A1, the PML tumor suppressor, and the cell cycle regulator CDKN1B. Additionally, may function as a cellular quality control ubiquitin ligase by helping the degradation of the cytoplasmic misfolded proteins. Finally, UBE3A also promotes its own degradation in vivo. Plays an important role in the regulation of the circadian clock: involved in the ubiquitination of the core clock component BMAL1, leading to its proteasomal degradation. Acts as transcriptional coactivator of progesterone receptor PGR upon progesterone hormone activation. Acts as a regulator of synaptic development by mediating ubiquitination and degradation of ARC. Required for synaptic remodeling in neurons by mediating ubiquitination and degradation of LAMTOR1, thereby limiting mTORC1 signaling and activity-dependent synaptic remodeling. Synergizes with WBP2 in enhancing PGR activity. (Microbial infection) Catalyzes the high-risk human papilloma virus E6-mediated ubiquitination of p53/TP53, contributing to the neoplastic progression of cells infected by these viruses. The protein is Ubiquitin-protein ligase E3A of Homo sapiens (Human).